The following is a 484-amino-acid chain: Monocarboxylate transporter 2 (484 aa).

Over 1 to 16 (MPSETAVPPPHPIPPD) the chain is Cytoplasmic. The chain crosses the membrane as a helical span at residues 17 to 37 (GGWGWVVVGAAFISIGFSYAF). At 38–60 (PKAVTVFFKDIQQIFQASYSEIA) the chain is on the extracellular side. A helical membrane pass occupies residues 61-81 (WISSIMLAVMYAGGPISSVLV). Over 82 to 87 (NNYGSR) the chain is Cytoplasmic. A helical membrane pass occupies residues 88–108 (PVVIIGGLLCCTGMILASFSN). Over 109–116 (SVLELYLT) the chain is Extracellular. Residues 117–137 (IGFIGGLGLAFNLQPALTIIG) traverse the membrane as a helical segment. Topologically, residues 138-144 (KYFYRRR) are cytoplasmic. The chain crosses the membrane as a helical span at residues 145 to 165 (PMANGLAMAGSPVFLSSLAPF). The Extracellular portion of the chain corresponds to 166–174 (NQYLFNSYG). The helical transmembrane segment at 175 to 195 (WKGSFLILGGIFLHSCVAGCL) threads the bilayer. Over 196–245 (MRPVQTSPRKSKSKSKVGSRQDGSMKKASKVSTAEKINRFLDFSLFKHRG) the chain is Cytoplasmic. The segment at 201–224 (TSPRKSKSKSKVGSRQDGSMKKAS) is disordered. Residues 246-266 (FLIYLSGNVIMFLGFFAPIIF) traverse the membrane as a helical segment. Over 267–282 (LAPYAKDKGVDEYNAA) the chain is Extracellular. Residues 283-303 (LLLSVMAFVDMFARPTGGLIA) traverse the membrane as a helical segment. Residues 304–311 (NSKLIRPR) are Cytoplasmic-facing. A helical membrane pass occupies residues 312–332 (IQYFFSFAIVFTGICHLLCPL). The Extracellular segment spans residues 333–337 (ADTYP). The chain crosses the membrane as a helical span at residues 338 to 358 (ALVVYSIFFGYGFGSVSSVLF). The Cytoplasmic portion of the chain corresponds to 359 to 372 (ETLMDLVGPARFSS). A helical membrane pass occupies residues 373 to 393 (AVGLATIVECCPVLLGPPLAG). At 394–405 (KLVDKTKDYKYM) the chain is on the extracellular side. A helical membrane pass occupies residues 406-426 (YIASGTIVVISGIYLFIGNAI). The Cytoplasmic segment spans residues 427–484 (NYRLLAKERKREKARKKKSATHPSRESEALSRSKQDDVSVKVSNPHNSPSDRERESNI). Residues 437-484 (REKARKKKSATHPSRESEALSRSKQDDVSVKVSNPHNSPSDRERESNI) form a disordered region. 2 stretches are compositionally biased toward basic and acidic residues: residues 449 to 465 (PSRE…DDVS) and 475 to 484 (PSDRERESNI).

Belongs to the major facilitator superfamily. Monocarboxylate porter (TC 2.A.1.13) family. In terms of assembly, homodimer. Interacts with GRID2IP. Interacts with EMB; interaction mediates SLC16A7 targeting to the plasma membrane. Interacts with isoform 2 of BSG. In terms of tissue distribution, abundant on the surface of hepatocytes. Present on parietal cells of the oxyntic gland of the stomach, on the basolateral surface of epithelial cells in the collecting ducts of the kidney, on sperm tails throughout the epididymis. Expressed in mitochondria-rich skeletal muscle fibers and cardiac myocytes (at protein level).

It is found in the cell membrane. It localises to the basolateral cell membrane. The protein localises to the cytoplasm. The catalysed reaction is pyruvate(out) + H(+)(out) = pyruvate(in) + H(+)(in). The enzyme catalyses 3-methyl-2-oxobutanoate(out) + H(+)(out) = 3-methyl-2-oxobutanoate(in) + H(+)(in). It catalyses the reaction (S)-lactate(in) + H(+)(in) = (S)-lactate(out) + H(+)(out). It carries out the reaction acetoacetate(out) + H(+)(out) = acetoacetate(in) + H(+)(in). The catalysed reaction is (R)-3-hydroxybutanoate(out) + H(+)(out) = (R)-3-hydroxybutanoate(in) + H(+)(in). The enzyme catalyses 4-methyl-2-oxopentanoate(out) + H(+)(out) = 4-methyl-2-oxopentanoate(in) + H(+)(in). It catalyses the reaction (S)-3-hydroxybutanoate(out) + H(+)(out) = (S)-3-hydroxybutanoate(in) + H(+)(in). Transport activity exhibits steep dependence on substrate concentration. Substrate concentration sensitivity of SLC16A7 arises from the strong inter-subunit cooperativity of the SLC16A7 dimer during transport. Inhibited by AR-C155858. In terms of biological role, proton-coupled monocarboxylate symporter. Catalyzes the rapid transport across the plasma membrane of monocarboxylates such as L-lactate, pyruvate and ketone bodies, acetoacetate, beta-hydroxybutyrate and acetate. Dimerization is functionally required and both subunits work cooperatively in transporting substrate. The chain is Monocarboxylate transporter 2 (SLC16A7) from Mesocricetus auratus (Golden hamster).